The sequence spans 229 residues: 5'-methylthioadenosine/S-adenosylhomocysteine nucleosidase (229 aa).

Glu-12 serves as the catalytic Proton acceptor. Residues Gly-78, Ile-152, and 173 to 174 (ME) each bind substrate. Asp-197 acts as the Proton donor in catalysis.

The protein belongs to the PNP/UDP phosphorylase family. MtnN subfamily.

It catalyses the reaction S-adenosyl-L-homocysteine + H2O = S-(5-deoxy-D-ribos-5-yl)-L-homocysteine + adenine. It carries out the reaction S-methyl-5'-thioadenosine + H2O = 5-(methylsulfanyl)-D-ribose + adenine. The enzyme catalyses 5'-deoxyadenosine + H2O = 5-deoxy-D-ribose + adenine. It functions in the pathway amino-acid biosynthesis; L-methionine biosynthesis via salvage pathway; S-methyl-5-thio-alpha-D-ribose 1-phosphate from S-methyl-5'-thioadenosine (hydrolase route): step 1/2. Its function is as follows. Catalyzes the irreversible cleavage of the glycosidic bond in both 5'-methylthioadenosine (MTA) and S-adenosylhomocysteine (SAH/AdoHcy) to adenine and the corresponding thioribose, 5'-methylthioribose and S-ribosylhomocysteine, respectively. Also cleaves 5'-deoxyadenosine, a toxic by-product of radical S-adenosylmethionine (SAM) enzymes, into 5-deoxyribose and adenine. This Mannheimia succiniciproducens (strain KCTC 0769BP / MBEL55E) protein is 5'-methylthioadenosine/S-adenosylhomocysteine nucleosidase.